Here is a 164-residue protein sequence, read N- to C-terminus: Single-stranded DNA-binding protein 2 (164 aa).

Residues 5 to 109 (INKVILVGNL…IVADEMQMLG (105 aa)) enclose the SSB domain. The tract at residues 105 to 164 (MQMLGGRSDGGGMGGGGERPQRQTSQRQDYAPRRQARQPSQSPQSSPPPMDDFADDDIPF) is disordered. A compositionally biased stretch (gly residues) spans 111-122 (RSDGGGMGGGGE). The short motif at 159–164 (DDDIPF) is the Important for interaction with partner proteins element.

Homotetramer.

Its function is as follows. Plays an important role in DNA replication, recombination and repair. Binds to ssDNA and to an array of partner proteins to recruit them to their sites of action during DNA metabolism. The chain is Single-stranded DNA-binding protein 2 (ssb2) from Xylella fastidiosa (strain 9a5c).